Reading from the N-terminus, the 346-residue chain is UDP-N-acetylenolpyruvoylglucosamine reductase (346 aa).

In terms of domain architecture, FAD-binding PCMH-type spans 18–189; it reads LRAQARAFIA…VSVVFALKTH (172 aa). R165 is a catalytic residue. The Proton donor role is filled by S240. Residue E336 is part of the active site.

The protein belongs to the MurB family. FAD is required as a cofactor.

The protein resides in the cytoplasm. It catalyses the reaction UDP-N-acetyl-alpha-D-muramate + NADP(+) = UDP-N-acetyl-3-O-(1-carboxyvinyl)-alpha-D-glucosamine + NADPH + H(+). The protein operates within cell wall biogenesis; peptidoglycan biosynthesis. Its function is as follows. Cell wall formation. The polypeptide is UDP-N-acetylenolpyruvoylglucosamine reductase (Neisseria meningitidis serogroup C (strain 053442)).